Consider the following 385-residue polypeptide: Cytochrome b (385 aa).

A run of 4 helical transmembrane segments spans residues 34 to 54 (FGSL…LLTM), 78 to 99 (WFIR…FIHI), 114 to 134 (WYSG…GYVL), and 179 to 199 (FLVL…IHLV). Heme b-binding residues include His-84 and His-98. The heme b site is built by His-183 and His-197. His-202 is an a ubiquinone binding site. Helical transmembrane passes span 227–247 (FKDI…SLLL), 289–309 (LAGI…PILI), 321–341 (LMQV…WLGA), and 348–368 (FILM…VMFP).

This sequence belongs to the cytochrome b family. The cytochrome bc1 complex contains 3 respiratory subunits (MT-CYB, CYC1 and UQCRFS1), 2 core proteins (UQCRC1 and UQCRC2) and probably 6 low-molecular weight proteins. It depends on heme b as a cofactor.

It is found in the mitochondrion inner membrane. In terms of biological role, component of the ubiquinol-cytochrome c reductase complex (complex III or cytochrome b-c1 complex) that is part of the mitochondrial respiratory chain. The b-c1 complex mediates electron transfer from ubiquinol to cytochrome c. Contributes to the generation of a proton gradient across the mitochondrial membrane that is then used for ATP synthesis. This Eptatretus burgeri (Inshore hagfish) protein is Cytochrome b (MT-CYB).